An 867-amino-acid polypeptide reads, in one-letter code: MVNKKYTSGQNENEKLMDRIEKLDLSESNILNNDFITNELRKVYPEYNRKPLKGFKQLVEKAMNQIIKNLSSCESSENEDGDNKMEESDGDDVEIISPPLPPPSSNILNEQLTSQYKQNIKNTPPTTTTTTPAKRNRDENIPSNVNSNNNNNNNNNAINSNTTTNNVNTPNSKPKKKLKNSSNGNNVFQFSNNNNNNGNNKDNNLSNGLIPTINFSNLGGVESCLRDIREHIEYPICHPEIYSHLGVEPPRGILLHGPSGCGKTLLAKAIAGELKVPLFAISATEITSGVSGESEARVRTLFSNAIAQAPCIIFIDEIDAIAPKRESASKDMERRIVSQLLTCMDSLNYLSSNNSTNEPNEQTEQQQQQQQDIIEVDSQATTTTTASNNNNKQQKNDFKKGHVIVIGATNRPESLDTALRIGGRFDKEICLGIPDQTARCKILKVITSKMRLENNFDYEEIATLTPGYVGADINLLVKEAATNSVNRIFTSNLNGASSSSSSSSSSTTNINNIGLSTELLISKEPLEPEKLNSLYIEMIDFKKALKKVVPAAKREGFATIPNVTWDDVGALSGVREELTNSILRPIRYPKKYKNMGIDSPAGVLMYGPPGCGKTLLAKAIASECQANFISVKGPELLNKYVGESERAVRQVFQRAAASSPCVIFFDEFDALAPKRGGGDGGGNQATERVVNQLLTEMDGLEKRSEVFIIAATNRPDIIDAAMCRPGRLDKMVYVPLPSPEERCEILKTLTHKIPIHQDVDLIKVGTDLRCHSFSGADLSLLVKEAANHAISRGFDNNSTEPDTVTMEDFIFALSKIKPSVSRKDELMYDKLNNDINKSRDKKPNNSNNIPITNNIPITNNNNNMIIN.

Positions 70–203 are disordered; sequence LSSCESSENE…NNNNGNNKDN (134 aa). Residues 110-122 are compositionally biased toward polar residues; that stretch reads EQLTSQYKQNIKN. 3 stretches are compositionally biased toward low complexity: residues 123 to 132, 141 to 172, and 180 to 203; these read TPPTTTTTTP, IPSNVNSNNNNNNNNNAINSNTTTNNVNTPNS, and NSSNGNNVFQFSNNNNNNGNNKDN. Residue 257 to 264 coordinates ATP; sequence GPSGCGKT. The segment at 351–370 is disordered; the sequence is SSNNSTNEPNEQTEQQQQQQ. 607–614 contacts ATP; it reads GPPGCGKT. Residues 834 to 843 are compositionally biased toward basic and acidic residues; that stretch reads DINKSRDKKP. A disordered region spans residues 834-855; it reads DINKSRDKKPNNSNNIPITNNI. Over residues 844–855 the composition is skewed to low complexity; the sequence is NNSNNIPITNNI.

This sequence belongs to the AAA ATPase family.

It is found in the nucleus. It localises to the nucleolus. The protein localises to the nucleoplasm. In terms of biological role, involved in ribosome biogenesis. The protein is Putative ribosome biogenesis ATPase nvl (nvl) of Dictyostelium discoideum (Social amoeba).